We begin with the raw amino-acid sequence, 674 residues long: Dymeclin (674 aa).

Residue Gly2 is the site of N-myristoyl glycine attachment.

It belongs to the dymeclin family. Interacts with GOLM1 and PPIB. Myristoylated in vitro; myristoylation is not essential for protein targeting to Golgi compartment.

It localises to the cytoplasm. The protein localises to the golgi apparatus. The protein resides in the membrane. Necessary for correct organization of Golgi apparatus. Involved in bone development. The protein is Dymeclin (Dym) of Rattus norvegicus (Rat).